A 626-amino-acid polypeptide reads, in one-letter code: Basic helix-loop-helix ARNT-like protein 1 (626 aa).

The interval 1-60 (MADQRMDISSTISDFMSPGPTDLLSSSLGTSGVDCNRKRKGSSTDYQESMDTDKDDPHGR) is disordered. Serine 17 carries the post-translational modification Phosphoserine; by GSK3-beta. The segment covering 17-32 (SPGPTDLLSSSLGTSG) has biased composition (low complexity). Threonine 21 carries the phosphothreonine; by GSK3-beta modification. Residues 36 to 41 (NRKRKG) carry the Nuclear localization signal motif. Over residues 51–60 (DTDKDDPHGR) the composition is skewed to basic and acidic residues. The bHLH domain occupies 72 to 125 (NAREAHSQIEKRRRDKMNSFIDELASLVPTCNAMSRKLDKLTVLRMAVQHMKTL). A Phosphoserine modification is found at serine 78. Serine 90 carries the phosphoserine; by CK2 modification. Positions 142–152 (LSDDELKHLIL) match the Nuclear export signal 1 motif. Residues 143–215 (SDDELKHLIL…EQLSSSDTAP (73 aa)) enclose the PAS 1 domain. A Glycyl lysine isopeptide (Lys-Gly) (interchain with G-Cter in SUMO2 and SUMO3) cross-link involves residue lysine 252. Lysine 259 participates in a covalent cross-link: Glycyl lysine isopeptide (Lys-Gly) (interchain with G-Cter in SUMO2). A PAS 2 domain is found at 326–396 (PQPVNGEIRV…ECHRQVLQTR (71 aa)). Residues 361–369 (LAYLPQELL) carry the Nuclear export signal 2 motif. A PAC domain is found at 401–444 (TNCYKFKIKDGSFITLRSRWFSFMNPWTKEVEYIVSTNTVVLAN). 2 disordered regions span residues 458-493 (ASPHSMDSMLPSGEGGPKRTHPTVPGIPGGTRAGAG) and 511-595 (GSSP…SPSN). The segment covering 484 to 493 (IPGGTRAGAG) has biased composition (gly residues). An interaction with CIART region spans residues 508 to 588 (RIRGSSPSSC…IGIDMIDNDQ (81 aa)). Over residues 511–521 (GSSPSSCGSSP) the composition is skewed to low complexity. Lysine 538 is subject to N6-acetyllysine.

In terms of assembly, component of the circadian clock oscillator which includes the CRY1/2 proteins, CLOCK or NPAS2,BMAL1 or BMAL2, CSNK1D and/or CSNK1E, TIMELESS and the PER1/2/3 proteins. Forms a heterodimer with CLOCK. The CLOCK-BMAL1 heterodimer is required for E-box-dependent transactivation, for CLOCK nuclear translocation and degradation, and, for phosphorylation of both CLOCK and BMAL1. Part of a nuclear complex which also includes RACK1 and PRKCA; RACK1 and PRKCA are recruited to the complex in a circadian manner. Interacts with NPAS2. Interacts with EZH2. Interacts with SUMO3. Interacts with SIRT1. Interacts with AHR. Interacts with ID1, ID2 and ID3. Interacts with DDX4. Interacts with OGT. Interacts with EED and SUZ12. Interacts with MTA1. Interacts with CIART. Interacts with HSP90. Interacts with KAT2B and EP300. Interacts with BHLHE40/DEC1 and BHLHE41/DEC2. Interacts with RELB and the interaction is enhanced in the presence of CLOCK. Interacts with PER1, PER2, CRY1 and CRY2 and this interaction requires a translocation to the nucleus. Interaction of the CLOCK-BMAL1 heterodimer with PER or CRY inhibits transcription activation. Interaction of the CLOCK-BMAL1 with CRY1 is independent of DNA but with PER2 is off DNA. The CLOCK-BMAL1 heterodimer interacts with GSK3B. Interacts with KDM5A. Interacts with KMT2A; in a circadian manner. Interacts with UBE3A. Interacts with PRKCG. Interacts with MAGEL2. Interacts with NCOA2. Interacts with THRAP3. The CLOCK-BMAL1 heterodimer interacts with PASD1. Interacts with PASD1. Interacts with USP9X. Interacts with PIWIL2 (via PIWI domain). Interacts with HDAC3. Interacts with HNF4A. Post-translationally, ubiquitinated, leading to its proteasomal degradation. Deubiquitinated by USP9X. O-glycosylated; contains O-GlcNAc. O-glycosylation by OGT prevents protein degradation by inhibiting ubiquitination. It also stabilizes the CLOCK-BMAL1 heterodimer thereby increasing CLOCK-BMAL1-mediated transcription of genes in the negative loop of the circadian clock such as PER1/2/3 and CRY1/2. In terms of processing, acetylated on Lys-538 by CLOCK during the repression phase of the circadian cycle. Acetylation facilitates recruitment of CRY1 protein and initiates the repression phase of the circadian cycle. Acetylated at Lys-538 by KAT5 during the activation phase of the cycle, leading to recruitment of the positive transcription elongation factor b (P-TEFb) and BRD4, followed by productive elongation of circadian transcripts. Deacetylated by SIRT1, which may result in decreased protein stability. Post-translationally, phosphorylated upon dimerization with CLOCK. Phosphorylation enhances the transcriptional activity, alters the subcellular localization and decreases the stability of the CLOCK-BMAL1 heterodimer by promoting its degradation. Phosphorylation shows circadian variations in the liver with a peak between CT10 to CT14. Phosphorylation at Ser-90 by CK2 is essential for its nuclear localization, its interaction with CLOCK and controls CLOCK nuclear entry. Dephosphorylation at Ser-78 is important for dimerization with CLOCK and transcriptional activity. Sumoylated on Lys-259 upon dimerization with CLOCK. Predominantly conjugated to poly-SUMO2/3 rather than SUMO1 and the level of these conjugates undergo rhythmic variation, peaking at CT9-CT12. Sumoylation localizes it exclusively to the PML body and promotes its ubiquitination in the PML body, ubiquitin-dependent proteasomal degradation and the transcriptional activity of the CLOCK-BMAL1 heterodimer. In terms of processing, undergoes lysosome-mediated degradation in a time-dependent manner in the liver. In terms of tissue distribution, hair follicles (at protein level). Highly expressed in the adult brain, skeletal muscle and heart.

The protein resides in the nucleus. The protein localises to the cytoplasm. Its subcellular location is the PML body. There is conflicting data about the effect of NAD cofactors on activity. PubMed:11441146 suggests that the redox state of the cell can modulate the transcriptional activity of the CLOCK-BMAL1 heterodimer; NADH and NADPH enhance the DNA-binding activity of the heterodimer. PubMed:23229515 reports that NADH and NADPH have no significant effect on DNA-binding activity of the CLOCK-BMAL1 heterodimer. Transcriptional activator which forms a core component of the circadian clock. The circadian clock, an internal time-keeping system, regulates various physiological processes through the generation of approximately 24 hour circadian rhythms in gene expression, which are translated into rhythms in metabolism and behavior. It is derived from the Latin roots 'circa' (about) and 'diem' (day) and acts as an important regulator of a wide array of physiological functions including metabolism, sleep, body temperature, blood pressure, endocrine, immune, cardiovascular, and renal function. Consists of two major components: the central clock, residing in the suprachiasmatic nucleus (SCN) of the brain, and the peripheral clocks that are present in nearly every tissue and organ system. Both the central and peripheral clocks can be reset by environmental cues, also known as Zeitgebers (German for 'timegivers'). The predominant Zeitgeber for the central clock is light, which is sensed by retina and signals directly to the SCN. The central clock entrains the peripheral clocks through neuronal and hormonal signals, body temperature and feeding-related cues, aligning all clocks with the external light/dark cycle. Circadian rhythms allow an organism to achieve temporal homeostasis with its environment at the molecular level by regulating gene expression to create a peak of protein expression once every 24 hours to control when a particular physiological process is most active with respect to the solar day. Transcription and translation of core clock components (CLOCK, NPAS2, BMAL1, BMAL2, PER1, PER2, PER3, CRY1 and CRY2) plays a critical role in rhythm generation, whereas delays imposed by post-translational modifications (PTMs) are important for determining the period (tau) of the rhythms (tau refers to the period of a rhythm and is the length, in time, of one complete cycle). A diurnal rhythm is synchronized with the day/night cycle, while the ultradian and infradian rhythms have a period shorter and longer than 24 hours, respectively. Disruptions in the circadian rhythms contribute to the pathology of cardiovascular diseases, cancer, metabolic syndromes and aging. A transcription/translation feedback loop (TTFL) forms the core of the molecular circadian clock mechanism. Transcription factors, CLOCK or NPAS2 and BMAL1 or BMAL2, form the positive limb of the feedback loop, act in the form of a heterodimer and activate the transcription of core clock genes and clock-controlled genes (involved in key metabolic processes), harboring E-box elements (5'-CACGTG-3') within their promoters. The core clock genes: PER1/2/3 and CRY1/2 which are transcriptional repressors form the negative limb of the feedback loop and interact with the CLOCK|NPAS2-BMAL1|BMAL2 heterodimer inhibiting its activity and thereby negatively regulating their own expression. This heterodimer also activates nuclear receptors NR1D1/2 and RORA/B/G, which form a second feedback loop and which activate and repress BMAL1 transcription, respectively. BMAL1 positively regulates myogenesis and negatively regulates adipogenesis via the transcriptional control of the genes of the canonical Wnt signaling pathway. Plays a role in normal pancreatic beta-cell function; regulates glucose-stimulated insulin secretion via the regulation of antioxidant genes NFE2L2/NRF2 and its targets SESN2, PRDX3, CCLC and CCLM. Negatively regulates the mTORC1 signaling pathway; regulates the expression of MTOR and DEPTOR. Controls diurnal oscillations of Ly6C inflammatory monocytes; rhythmic recruitment of the PRC2 complex imparts diurnal variation to chemokine expression that is necessary to sustain Ly6C monocyte rhythms. Regulates the expression of HSD3B2, STAR, PTGS2, CYP11A1, CYP19A1 and LHCGR in the ovary and also the genes involved in hair growth. Plays an important role in adult hippocampal neurogenesis by regulating the timely entry of neural stem/progenitor cells (NSPCs) into the cell cycle and the number of cell divisions that take place prior to cell-cycle exit. Regulates the circadian expression of CIART and KLF11. The CLOCK-BMAL1 heterodimer regulates the circadian expression of SERPINE1/PAI1, VWF, B3, CCRN4L/NOC, NAMPT, DBP, MYOD1, PPARGC1A, PPARGC1B, SIRT1, GYS2, F7, NGFR, GNRHR, BHLHE40/DEC1, ATF4, MTA1, KLF10 and also genes implicated in glucose and lipid metabolism. Promotes rhythmic chromatin opening, regulating the DNA accessibility of other transcription factors. The NPAS2-BMAL1 heterodimer positively regulates the expression of MAOA, F7 and LDHA and modulates the circadian rhythm of daytime contrast sensitivity by regulating the rhythmic expression of adenylate cyclase type 1 (ADCY1) in the retina. The preferred binding motif for the CLOCK-BMAL1 heterodimer is 5'-CACGTGA-3', which contains a flanking adenine nucleotide at the 3-prime end of the canonical 6-nucleotide E-box sequence. CLOCK specifically binds to the half-site 5'-CAC-3', while BMAL1 binds to the half-site 5'-GTGA-3'. The CLOCK-BMAL1 heterodimer also recognizes the non-canonical E-box motifs 5'-AACGTGA-3' and 5'-CATGTGA-3'. Essential for the rhythmic interaction of CLOCK with ASS1 and plays a critical role in positively regulating CLOCK-mediated acetylation of ASS1. Plays a role in protecting against lethal sepsis by limiting the expression of immune checkpoint protein CD274 in macrophages in a PKM2-dependent manner. Regulates the diurnal rhythms of skeletal muscle metabolism via transcriptional activation of genes promoting triglyceride synthesis (DGAT2) and metabolic efficiency (COQ10B). Its function is as follows. (Microbial infection) Regulates SARS coronavirus-2/SARS-CoV-2 entry and replication in lung epithelial cells probably through the post-transcriptional regulation of ACE2 and interferon-stimulated gene expression. In Homo sapiens (Human), this protein is Basic helix-loop-helix ARNT-like protein 1.